Here is a 368-residue protein sequence, read N- to C-terminus: Probable dual-specificity RNA methyltransferase RlmN (368 aa).

Residue Glu-111 is the Proton acceptor of the active site. Residues 117–355 form the Radical SAM core domain; it reads YPNRATLCIS…CTVRDTRGQE (239 aa). A disulfide bridge links Cys-124 with Cys-360. 3 residues coordinate [4Fe-4S] cluster: Cys-131, Cys-135, and Cys-138. S-adenosyl-L-methionine-binding positions include 181–182, Ser-215, 238–240, and Asn-317; these read GE and SLH. The active-site S-methylcysteine intermediate is the Cys-360.

This sequence belongs to the radical SAM superfamily. RlmN family. Requires [4Fe-4S] cluster as cofactor.

Its subcellular location is the cytoplasm. It carries out the reaction adenosine(2503) in 23S rRNA + 2 reduced [2Fe-2S]-[ferredoxin] + 2 S-adenosyl-L-methionine = 2-methyladenosine(2503) in 23S rRNA + 5'-deoxyadenosine + L-methionine + 2 oxidized [2Fe-2S]-[ferredoxin] + S-adenosyl-L-homocysteine. It catalyses the reaction adenosine(37) in tRNA + 2 reduced [2Fe-2S]-[ferredoxin] + 2 S-adenosyl-L-methionine = 2-methyladenosine(37) in tRNA + 5'-deoxyadenosine + L-methionine + 2 oxidized [2Fe-2S]-[ferredoxin] + S-adenosyl-L-homocysteine. Its function is as follows. Specifically methylates position 2 of adenine 2503 in 23S rRNA and position 2 of adenine 37 in tRNAs. The protein is Probable dual-specificity RNA methyltransferase RlmN of Corynebacterium diphtheriae (strain ATCC 700971 / NCTC 13129 / Biotype gravis).